A 447-amino-acid chain; its full sequence is Probable glycine dehydrogenase (decarboxylating) subunit 1 (447 aa).

Belongs to the GcvP family. N-terminal subunit subfamily. As to quaternary structure, the glycine cleavage system is composed of four proteins: P, T, L and H. In this organism, the P 'protein' is a heterodimer of two subunits.

The enzyme catalyses N(6)-[(R)-lipoyl]-L-lysyl-[glycine-cleavage complex H protein] + glycine + H(+) = N(6)-[(R)-S(8)-aminomethyldihydrolipoyl]-L-lysyl-[glycine-cleavage complex H protein] + CO2. The glycine cleavage system catalyzes the degradation of glycine. The P protein binds the alpha-amino group of glycine through its pyridoxal phosphate cofactor; CO(2) is released and the remaining methylamine moiety is then transferred to the lipoamide cofactor of the H protein. The sequence is that of Probable glycine dehydrogenase (decarboxylating) subunit 1 from Bacillus cereus (strain G9842).